A 218-amino-acid polypeptide reads, in one-letter code: Adenylate kinase (218 aa).

10–15 (GAGKGT) serves as a coordination point for ATP. The tract at residues 30-59 (STGDMLRAAVKAGSEMGLKAKAVMDAGQLV) is NMP. AMP-binding positions include threonine 31, arginine 36, 57–59 (QLV), 85–88 (GFPR), and glutamine 92. An LID region spans residues 122–159 (GRRVHEASGRTYHLVYNPPKVEGKDDVTGEDLVQRADD). ATP-binding positions include arginine 123 and 132–133 (TY). AMP is bound by residues arginine 156 and arginine 167. Glycine 203 serves as a coordination point for ATP.

This sequence belongs to the adenylate kinase family. In terms of assembly, monomer.

The protein resides in the cytoplasm. It carries out the reaction AMP + ATP = 2 ADP. Its pathway is purine metabolism; AMP biosynthesis via salvage pathway; AMP from ADP: step 1/1. Catalyzes the reversible transfer of the terminal phosphate group between ATP and AMP. Plays an important role in cellular energy homeostasis and in adenine nucleotide metabolism. The protein is Adenylate kinase of Marinomonas sp. (strain MWYL1).